The chain runs to 625 residues: Glucose dehydrogenase [FAD, quinone] (625 aa).

A signal peptide spans 1-42 (MSASASACDCLVGVPTGPTLASTCGGSAFMLFMGLLEVFIRS). Residue 66 to 95 (DFIVIGGGSAGSVVASRLSEVPQWKVLLIE) coordinates FAD. Histidine 544 (proton acceptor) is an active-site residue. Residue selenocysteine 613 is a non-standard amino acid, selenocysteine.

It belongs to the GMC oxidoreductase family. The cofactor is FAD.

Its subcellular location is the secreted. It carries out the reaction a quinone + D-glucose = D-glucono-1,5-lactone + a quinol. Functionally, essential for cuticular modification during development. The sequence is that of Glucose dehydrogenase [FAD, quinone] (Gld) from Drosophila melanogaster (Fruit fly).